The following is a 128-amino-acid chain: 3-aminoacrylate deaminase RutC (128 aa).

It belongs to the RutC family.

The catalysed reaction is (Z)-3-aminoacrylate + H2O + H(+) = 3-oxopropanoate + NH4(+). Its function is as follows. Involved in pyrimidine catabolism. Catalyzes the deamination of 3-aminoacrylate to malonic semialdehyde, a reaction that can also occur spontaneously. RutC may facilitate the reaction and modulate the metabolic fitness, rather than catalyzing essential functions. The polypeptide is 3-aminoacrylate deaminase RutC (Serratia proteamaculans (strain 568)).